The following is a 150-amino-acid chain: Putative pre-16S rRNA nuclease (150 aa).

Belongs to the YqgF nuclease family.

The protein resides in the cytoplasm. Functionally, could be a nuclease involved in processing of the 5'-end of pre-16S rRNA. The polypeptide is Putative pre-16S rRNA nuclease (Chlamydia felis (strain Fe/C-56) (Chlamydophila felis)).